The chain runs to 367 residues: Anthranilate phosphoribosyltransferase (367 aa).

Residues 1–17 (MVLSSEASSAADHSAAA) are compositionally biased toward low complexity. Residues 1–22 (MVLSSEASSAADHSAAAPIPTS) form a disordered region. Residues G104, 107–108 (GD), T112, 114–117 (NLST), 132–140 (KHGNRAASS), and G144 each bind 5-phospho-alpha-D-ribose 1-diphosphate. Position 104 (G104) interacts with anthranilate. S116 contributes to the Mg(2+) binding site. N135 contributes to the anthranilate binding site. Residue R190 coordinates anthranilate. Mg(2+) contacts are provided by D248 and E249.

This sequence belongs to the anthranilate phosphoribosyltransferase family. As to quaternary structure, homodimer. It depends on Mg(2+) as a cofactor.

It catalyses the reaction N-(5-phospho-beta-D-ribosyl)anthranilate + diphosphate = 5-phospho-alpha-D-ribose 1-diphosphate + anthranilate. Its pathway is amino-acid biosynthesis; L-tryptophan biosynthesis; L-tryptophan from chorismate: step 2/5. Functionally, catalyzes the transfer of the phosphoribosyl group of 5-phosphorylribose-1-pyrophosphate (PRPP) to anthranilate to yield N-(5'-phosphoribosyl)-anthranilate (PRA). The sequence is that of Anthranilate phosphoribosyltransferase from Mycobacterium ulcerans (strain Agy99).